The chain runs to 362 residues: Serpentine receptor class delta-2 (362 aa).

The next 7 membrane-spanning stretches (helical) occupy residues 27–47 (LSCL…YLIW), 57–77 (YAIY…ISFF), 104–124 (FCYF…WILL), 144–164 (LIRN…VYVF), 209–229 (LISI…ILYF), 264–284 (GIPI…FGII), and 292–312 (ITFR…IIFV).

This sequence belongs to the nematode receptor-like protein srd family.

It is found in the membrane. In terms of biological role, thought to be a chemosensory receptor. The polypeptide is Serpentine receptor class delta-2 (srd-2) (Caenorhabditis elegans).